The primary structure comprises 454 residues: tRNA modification GTPase MnmE (454 aa).

(6S)-5-formyl-5,6,7,8-tetrahydrofolate-binding residues include Arg23, Glu80, and Lys120. In terms of domain architecture, TrmE-type G spans 216–377; sequence GMKVVIAGRP…LRNHLKQSMG (162 aa). Position 226 (Asn226) interacts with K(+). GTP-binding positions include 226–231, 245–251, 270–273, 335–338, and 358–360; these read NAGKSS, TDIAGTT, DTAG, NKAD, and SAR. Ser230 is a Mg(2+) binding site. The K(+) site is built by Thr245, Ile247, and Thr250. Residue Thr251 coordinates Mg(2+). (6S)-5-formyl-5,6,7,8-tetrahydrofolate is bound at residue Lys454.

The protein belongs to the TRAFAC class TrmE-Era-EngA-EngB-Septin-like GTPase superfamily. TrmE GTPase family. Homodimer. Heterotetramer of two MnmE and two MnmG subunits. The cofactor is K(+).

It localises to the cytoplasm. Exhibits a very high intrinsic GTPase hydrolysis rate. Involved in the addition of a carboxymethylaminomethyl (cmnm) group at the wobble position (U34) of certain tRNAs, forming tRNA-cmnm(5)s(2)U34. The polypeptide is tRNA modification GTPase MnmE (Citrobacter koseri (strain ATCC BAA-895 / CDC 4225-83 / SGSC4696)).